Consider the following 444-residue polypeptide: Phosphoglucosamine mutase (444 aa).

The active-site Phosphoserine intermediate is the Ser-100. Mg(2+) is bound by residues Ser-100, Asp-240, Asp-242, and Asp-244. At Ser-100 the chain carries Phosphoserine.

This sequence belongs to the phosphohexose mutase family. Mg(2+) serves as cofactor. Activated by phosphorylation.

The catalysed reaction is alpha-D-glucosamine 1-phosphate = D-glucosamine 6-phosphate. Catalyzes the conversion of glucosamine-6-phosphate to glucosamine-1-phosphate. The protein is Phosphoglucosamine mutase of Desulforamulus reducens (strain ATCC BAA-1160 / DSM 100696 / MI-1) (Desulfotomaculum reducens).